The chain runs to 421 residues: Cytochrome c biogenesis protein Ccs1 (421 aa).

3 helical membrane-spanning segments follow: residues 12–32 (LRFA…GTVI), 71–91 (TWWF…CTIL), and 157–177 (IAPI…IFGA).

The protein belongs to the Ccs1/CcsB family. In terms of assembly, may interact with CcsA.

The protein localises to the plastid. It localises to the chloroplast thylakoid membrane. In terms of biological role, required during biogenesis of c-type cytochromes (cytochrome c6 and cytochrome f) at the step of heme attachment. This chain is Cytochrome c biogenesis protein Ccs1, found in Trieres chinensis (Marine centric diatom).